A 503-amino-acid polypeptide reads, in one-letter code: Transmembrane prolyl 4-hydroxylase (503 aa).

The tract at residues 1-49 is disordered; the sequence is MAAAVATVQRPEAETVEEASNLQWPLPPEHRPSGAATRPGDSEDAPVRP. The Cytoplasmic portion of the chain corresponds to 1 to 61; the sequence is MAAAVATVQR…KPRGICSRAY (61 aa). A helical; Signal-anchor for type II membrane protein membrane pass occupies residues 62–82; it reads FLVLMVFVHLYLGNVLALLLF. Over 83–503 the chain is Lumenal; sequence VHYSNGDEST…RAYSDARVEL (421 aa). The interval 90–110 is disordered; the sequence is ESTDPGPQRREQSPQPVPTLG. EF-hand domains lie at 186-221 and 225-260; these read AMQV…GNGR and PENI…DFHK. Residues D199, N201, D203, R205, E210, D238, D240, D242, and E249 each contribute to the Ca(2+) site. One can recognise a Fe2OG dioxygenase domain in the interval 310–461; it reads EFSEPLQVVR…KWIANNWINV (152 aa). Fe cation is bound by residues H329 and D331. N-linked (GlcNAc...) asparagine glycosylation is found at N349 and N369. Residue E375 coordinates Fe cation. A glycan (N-linked (GlcNAc...) asparagine) is linked at N383. K452 is a 2-oxoglutarate binding site.

In terms of assembly, homodimer. The cofactor is Fe(2+). L-ascorbate serves as cofactor. Glycosylated. In terms of tissue distribution, highest expression levels are detected in the eye and brain, especially in the retinal epithelium cells and cortical neurons. Also expressed in skeletal muscle, lung, heart, adrenal gland, kidney, prostate, thyroid and testis.

Its subcellular location is the endoplasmic reticulum membrane. It carries out the reaction L-prolyl-[hypoxia-inducible factor alpha subunit] + 2-oxoglutarate + O2 = trans-4-hydroxy-L-prolyl-[hypoxia-inducible factor alpha subunit] + succinate + CO2. Functionally, catalyzes the post-translational formation of 4-hydroxyproline in hypoxia-inducible factor (HIF) alpha proteins. Hydroxylates HIF1A at 'Pro-402' and 'Pro-564'. May function as a cellular oxygen sensor and, under normoxic conditions, may target HIF through the hydroxylation for proteasomal degradation via the von Hippel-Lindau ubiquitination complex. In Mus musculus (Mouse), this protein is Transmembrane prolyl 4-hydroxylase (P4htm).